The chain runs to 322 residues: UDP-N-acetylenolpyruvoylglucosamine reductase (322 aa).

An FAD-binding PCMH-type domain is found at 36–202; the sequence is RAGGPAQVLF…TSVLFEGVPG (167 aa). Residue R182 is part of the active site. S231 functions as the Proton donor in the catalytic mechanism. E301 is an active-site residue.

This sequence belongs to the MurB family. Requires FAD as cofactor.

It is found in the cytoplasm. It carries out the reaction UDP-N-acetyl-alpha-D-muramate + NADP(+) = UDP-N-acetyl-3-O-(1-carboxyvinyl)-alpha-D-glucosamine + NADPH + H(+). It participates in cell wall biogenesis; peptidoglycan biosynthesis. In terms of biological role, cell wall formation. This is UDP-N-acetylenolpyruvoylglucosamine reductase from Brucella canis (strain ATCC 23365 / NCTC 10854 / RM-666).